The chain runs to 279 residues: Large ribosomal subunit protein uL5c (279 aa).

Disordered stretches follow at residues 1–23 (MAAT…TASS) and 40–63 (LRVA…SPSG). The N-terminal 43 residues, 1–43 (MAATAVTLPSSPAPFPVTTTASSSRNVRLLLRSPPPRRALRVA), are a transit peptide targeting the chloroplast. The segment covering 41-50 (RVAASAAADA) has biased composition (low complexity). The segment covering 51–60 (PPKPAPPPTS) has biased composition (pro residues).

This sequence belongs to the universal ribosomal protein uL5 family. Part of the 50S ribosomal subunit; contacts the 5S rRNA.

The protein resides in the plastid. Its subcellular location is the chloroplast. In terms of biological role, binds 5S rRNA, forms part of the central protuberance of the 50S subunit. This is Large ribosomal subunit protein uL5c (RPL5) from Oryza sativa subsp. japonica (Rice).